We begin with the raw amino-acid sequence, 260 residues long: Nuclear shuttle protein (260 aa).

The interval 1 to 29 (MRRGAYTPRSTPFPRDRRSYNAGKGRSFR) is disordered. Positions 21 to 42 (NAGKGRSFRSYRRRGPVRPLAR) match the Bipartite nuclear localization signal motif. Residues 84 to 100 (VKTRALSDNRVGDYIKL) carry the Nuclear localization signal motif. The segment at 154-191 (QLFGSINASYADLSIQDPYKDRFTVIRQVSYPVNTEKG) is interaction with Arabidopsis thaliana NSI protein.

It belongs to the begomovirus nuclear shuttle protein family. Binds to single-stranded and double-stranded viral DNA. Interacts with the host nuclear shuttle interacting (NSI) protein. This interaction may allow NSP to recruit NSI monomers to the viral genome and thus regulate nuclear export of viral genome by NSP.

It localises to the host nucleus. It is found in the host cytoplasm. Its subcellular location is the host cell membrane. Functionally, binds to the genomic viral ssDNA, shuttles it into and out of the cell nucleus. Begomoviruses use 2 proteins to transport their DNA from cell to cell. The nuclear shuttle protein (NSP) shuttles it between nucleus and cytoplasm and the movement protein (MP) probably transports the DNA-NSP complex to the cell periphery and facilitates movement across the cell wall. This Indian cassava mosaic virus (ICMV) protein is Nuclear shuttle protein.